The primary structure comprises 203 residues: Twist-related protein 1 (203 aa).

Residues 1–18 (MMQDVSSSPVSPADDSLS) show a composition bias toward low complexity. Residues 1–106 (MMQDVSSSPV…GGGSPQSYEE (106 aa)) are disordered. A compositionally biased stretch (basic residues) spans 34 to 43 (RGGRKRRSSS). 2 stretches are compositionally biased toward gly residues: residues 47-66 (AGGG…GGDE) and 81-100 (GCGG…GGGS). A bHLH domain is found at 109–160 (TQRVMANVRERQRTQSLNEAFAALRKIIPTLPSDKLSKIQTLKLAARYIDFL). The tract at residues 162–192 (QVLQSDELDSKMASCSYVAHERLSYAFSVWR) is sufficient for transactivation activity.

As to quaternary structure, efficient DNA binding requires dimerization with another bHLH protein. Homodimer or heterodimer with E proteins such as TCF3. ID1 binds preferentially to TCF3 but does not interact efficiently with TWIST1 so ID1 levels control the amount of TCF3 available to dimerize with TWIST and thus determine the type of dimer formed.

The protein localises to the nucleus. In terms of biological role, acts as a transcriptional regulator. Inhibits myogenesis by sequestrating E proteins, inhibiting trans-activation by MEF2, and inhibiting DNA-binding by MYOD1 through physical interaction. This interaction probably involves the basic domains of both proteins. Also represses expression of pro-inflammatory cytokines such as TNFA and IL1B. Regulates cranial suture patterning and fusion. Activates transcription as a heterodimer with E proteins. Regulates gene expression differentially, depending on dimer composition. Homodimers induce expression of FGFR2 and POSTN while heterodimers repress FGFR2 and POSTN expression and induce THBS1 expression. Heterodimerization is also required for osteoblast differentiation. Represses the activity of the circadian transcriptional activator: NPAS2-BMAL1 heterodimer. The chain is Twist-related protein 1 (TWIST1) from Pongo pygmaeus (Bornean orangutan).